Consider the following 94-residue polypeptide: MNKEQFDVNLVPTWRQGYRFQFEPAQNGFVILYPEGMIKLNESAGAIGQYIDGKNNVSAIIAQLKQQFGDVAEIDNDVIDYMLVAQQQHWIDLV.

Belongs to the PqqD family. As to quaternary structure, monomer. Interacts with PqqE.

Its pathway is cofactor biosynthesis; pyrroloquinoline quinone biosynthesis. In terms of biological role, functions as a PqqA binding protein and presents PqqA to PqqE, in the pyrroloquinoline quinone (PQQ) biosynthetic pathway. The chain is PqqA binding protein from Acinetobacter baumannii (strain SDF).